The following is a 103-amino-acid chain: uncharacterized protein (103 aa).

Residues 33–57 traverse the membrane as a helical segment; sequence GYVAAIVAGPVSMSPLDWICPLLAI.

The protein resides in the membrane. This is an uncharacterized protein from Sinorhizobium fredii (strain NBRC 101917 / NGR234).